We begin with the raw amino-acid sequence, 234 residues long: Core atranone cluster (CAC) protein 1 (234 aa).

Its pathway is mycotoxin biosynthesis. Its function is as follows. Part of the core atranone cluster (CAC) which products are predicted to catalyze most or all steps of mycotoxin atranone synthesis, starting from geranylgeranyl pyrophosphate (GGPP). The initial cyclization of GGPP to dolabellane is probably performed by the terpene cyclase ATR13. The Baeyer-Villiger oxidation near the end of the atranone synthesis, which converts atranones D and E to atranones F and G is predicted to be catalyzed by the monooxygenase ATR8. Of the CAC's other predicted gene products, the reducing PKS ATR6 might synthesize a polyketide chain. This polyketide is probably transferred onto the atranone backbone by the polyketide transferase ATR5. Other predicted CAC products include 4 oxygenases (ATR2, ATR3, ATR4, and ATR14), 3 short-chain reductases (ATR7, ATR9, and ATR10), and a methyltransferase (ATR12). These may all be involved in the various steps of atranone biosynthesis, although their specific roles must await experimental determination. The sequence is that of Core atranone cluster (CAC) protein 1 from Stachybotrys chlorohalonatus (strain IBT 40285).